The chain runs to 580 residues: F-box only protein 24 (580 aa).

Residues 36–82 (PISIQLFPPELVEHIISFLPVRDLVALGQTCRYFHEVCDAEGVWRRI) form the F-box domain. One copy of the RCC1 repeat lies at 376 to 425 (GRIFMQGNNRYGQLGTGDKMDRGEPTQVRYLQRPITLWCGLNHSLVLSQS).

In terms of assembly, directly interacts with SKP1 and CUL1.

Its function is as follows. Substrate-recognition component of the SCF (SKP1-CUL1-F-box protein)-type E3 ubiquitin ligase complex. The protein is F-box only protein 24 (FBXO24) of Macaca fascicularis (Crab-eating macaque).